A 387-amino-acid polypeptide reads, in one-letter code: MKFIQLYGDRGLTIVKGEGQYVWDISGTKYLDLHTGIGVAFLGHRNRRVIEYLSRQMENIMTLSTSFSTPIRDEMLKELDPLKPDKMDNIILLNSGTEAVEAALKTARKITGRKKIIAFKNSFHGRTAGSLSVTWNKRYREPFEPLMSPVQFLTYNNIDELKNIDEQTAAVIVEPIQGESGVIPANEDFMKALREQTQKVGALLVVDEVQTGFGRTGKVWAYQHYGIIPDLLTAGKAIGGGFPVSALFLPDWIAEKLEEGDHGSTYGGNPMAMAAVTAASKVLKEDNVVEQASIKGEIFKKILREKLSDLKSVREIRGKGLMIGIEIRFPPAIALKVMQDERVLALKAGSTVIRFLAPYMITQSDMEEASNAARKGIIETENKRAIT.

Pyridoxal 5'-phosphate contacts are provided by residues 96–97 and phenylalanine 123; that span reads GT. Arginine 126 is a substrate binding site. 207–210 is a pyridoxal 5'-phosphate binding site; sequence DEVQ. Lysine 236 carries the N6-(pyridoxal phosphate)lysine modification. Residue serine 264 participates in substrate binding. A pyridoxal 5'-phosphate-binding site is contributed by threonine 265.

Belongs to the class-III pyridoxal-phosphate-dependent aminotransferase family. LysJ subfamily. Homodimer. Pyridoxal 5'-phosphate is required as a cofactor.

The protein localises to the cytoplasm. It catalyses the reaction [amino-group carrier protein]-C-terminal-gamma-(L-lysyl)-L-glutamate + 2-oxoglutarate = [amino-group carrier protein]-C-terminal-N-(1-carboxy-5-oxopentan-1-yl)-L-glutamine + L-glutamate. The enzyme catalyses [amino-group carrier protein]-C-terminal-gamma-(L-ornithyl)-L-glutamate + 2-oxoglutarate = [amino-group carrier protein]-C-terminal-gamma-(L-glutamyl-5-semialdehyde)-L-glutamate + L-glutamate. Its pathway is amino-acid biosynthesis; L-lysine biosynthesis via AAA pathway; L-lysine from L-alpha-aminoadipate (Thermus route): step 4/5. It participates in amino-acid biosynthesis; L-arginine biosynthesis. Involved in both the arginine and lysine biosynthetic pathways. The sequence is that of [LysW]-aminoadipate semialdehyde/glutamate semialdehyde transaminase from Sulfurisphaera tokodaii (strain DSM 16993 / JCM 10545 / NBRC 100140 / 7) (Sulfolobus tokodaii).